Here is a 300-residue protein sequence, read N- to C-terminus: Bifunctional protein FolD 2 (300 aa).

NADP(+)-binding positions include 165–167, S190, and I231; that span reads GRS.

It belongs to the tetrahydrofolate dehydrogenase/cyclohydrolase family. Homodimer.

The enzyme catalyses (6R)-5,10-methylene-5,6,7,8-tetrahydrofolate + NADP(+) = (6R)-5,10-methenyltetrahydrofolate + NADPH. It carries out the reaction (6R)-5,10-methenyltetrahydrofolate + H2O = (6R)-10-formyltetrahydrofolate + H(+). It functions in the pathway one-carbon metabolism; tetrahydrofolate interconversion. Functionally, catalyzes the oxidation of 5,10-methylenetetrahydrofolate to 5,10-methenyltetrahydrofolate and then the hydrolysis of 5,10-methenyltetrahydrofolate to 10-formyltetrahydrofolate. In Pseudomonas syringae pv. syringae (strain B728a), this protein is Bifunctional protein FolD 2.